The following is a 297-amino-acid chain: Mitochondrial thiamine pyrophosphate carrier 1 (297 aa).

Solcar repeat units follow at residues 13 to 94 (SHVF…TNAA), 102 to 195 (PPTI…IRAR), and 196 to 295 (WPET…LMRV). 6 helical membrane-spanning segments follow: residues 19-36 (LVSG…IAPL), 75-91 (IMYI…YSYT), 109-128 (LAGA…FDVL), 163-187 (GLGG…AMFG), 203-219 (TAGA…TFPL), and 270-287 (GIGL…INLW).

Belongs to the mitochondrial carrier (TC 2.A.29) family.

It is found in the mitochondrion inner membrane. Mitochondrial transporter that mediates uptake of thiamine pyrophosphate (ThPP) into mitochondria. In Vanderwaltozyma polyspora (strain ATCC 22028 / DSM 70294 / BCRC 21397 / CBS 2163 / NBRC 10782 / NRRL Y-8283 / UCD 57-17) (Kluyveromyces polysporus), this protein is Mitochondrial thiamine pyrophosphate carrier 1 (TPC1).